The chain runs to 177 residues: Adenine phosphoribosyltransferase (177 aa).

It belongs to the purine/pyrimidine phosphoribosyltransferase family. In terms of assembly, homodimer.

It localises to the cytoplasm. It catalyses the reaction AMP + diphosphate = 5-phospho-alpha-D-ribose 1-diphosphate + adenine. It functions in the pathway purine metabolism; AMP biosynthesis via salvage pathway; AMP from adenine: step 1/1. Its function is as follows. Catalyzes a salvage reaction resulting in the formation of AMP, that is energically less costly than de novo synthesis. In Chlorobium phaeovibrioides (strain DSM 265 / 1930) (Prosthecochloris vibrioformis (strain DSM 265)), this protein is Adenine phosphoribosyltransferase.